The sequence spans 153 residues: Transthyretin (153 aa).

Positions 1 to 24 (MAYYNTLALLTIFIFSGAFHRAQG) are cleaved as a signal peptide. C33 carries the post-translational modification Sulfocysteine. L-thyroxine contacts are provided by K38, E77, and S140.

The protein belongs to the transthyretin family. As to quaternary structure, homotetramer. Dimer of dimers. In the homotetramer, subunits assemble around a central channel that can accommodate two ligand molecules. Interacts with RBP4. Post-translationally, sulfonation of the reactive cysteine Cys-33 enhances the stability of the native conformation of TTR, avoiding misassembly of the protein leading to amyloid formation. In terms of tissue distribution, detected in plasma (at protein level). Expressed during metamorphosis in tadpole liver but not in tadpole brain, nor adult liver.

It localises to the secreted. Thyroid hormone-binding protein, with a much higher binding affinity for triiodothyronine (T3) than for thyroxine (T4). Probably transports triiodothyronine from the bloodstream to the brain. This chain is Transthyretin, found in Aquarana catesbeiana (American bullfrog).